The primary structure comprises 206 residues: Small ribosomal subunit protein uS4c (206 aa).

The region spanning 93-161 is the S4 RNA-binding domain; sequence MRLDNIVYRL…IEKNIELLDK (69 aa).

Belongs to the universal ribosomal protein uS4 family. In terms of assembly, part of the 30S ribosomal subunit. Contacts protein S5. The interaction surface between S4 and S5 is involved in control of translational fidelity.

Its subcellular location is the plastid. In terms of biological role, one of the primary rRNA binding proteins, it binds directly to 16S rRNA where it nucleates assembly of the body of the 30S subunit. With S5 and S12 plays an important role in translational accuracy. This Euglena longa (Euglenophycean alga) protein is Small ribosomal subunit protein uS4c (rps4).